We begin with the raw amino-acid sequence, 901 residues long: Core protein VP3 (901 aa).

Belongs to the orbivirus VP3 family.

Its subcellular location is the virion. The VP3 protein is one of the five proteins (with VP1, VP4, VP6 and VP7) which form the inner capsid of the virus. The chain is Core protein VP3 (Segment-3) from Antilocapra americana (Pronghorn).